The primary structure comprises 361 residues: Methionine import ATP-binding protein MetN (361 aa).

Positions Val-22–Leu-257 constitute an ABC transporter domain. Gly-54–Ser-61 contributes to the ATP binding site.

This sequence belongs to the ABC transporter superfamily. Methionine importer (TC 3.A.1.24) family. The complex is composed of two ATP-binding proteins (MetN), two transmembrane proteins (MetI) and a solute-binding protein (MetQ).

It is found in the cell inner membrane. The enzyme catalyses L-methionine(out) + ATP + H2O = L-methionine(in) + ADP + phosphate + H(+). It catalyses the reaction D-methionine(out) + ATP + H2O = D-methionine(in) + ADP + phosphate + H(+). Functionally, part of the ABC transporter complex MetNIQ involved in methionine import. Responsible for energy coupling to the transport system. In Rhizobium etli (strain ATCC 51251 / DSM 11541 / JCM 21823 / NBRC 15573 / CFN 42), this protein is Methionine import ATP-binding protein MetN.